A 366-amino-acid chain; its full sequence is Chorismate synthase (366 aa).

Arg48 is a binding site for NADP(+). FMN-binding positions include 131 to 133 (RAS), 243 to 244 (NA), Gly288, 303 to 307 (KPTSS), and Arg329.

Belongs to the chorismate synthase family. Homotetramer. It depends on FMNH2 as a cofactor.

It catalyses the reaction 5-O-(1-carboxyvinyl)-3-phosphoshikimate = chorismate + phosphate. Its pathway is metabolic intermediate biosynthesis; chorismate biosynthesis; chorismate from D-erythrose 4-phosphate and phosphoenolpyruvate: step 7/7. Functionally, catalyzes the anti-1,4-elimination of the C-3 phosphate and the C-6 proR hydrogen from 5-enolpyruvylshikimate-3-phosphate (EPSP) to yield chorismate, which is the branch point compound that serves as the starting substrate for the three terminal pathways of aromatic amino acid biosynthesis. This reaction introduces a second double bond into the aromatic ring system. The chain is Chorismate synthase from Bartonella henselae (strain ATCC 49882 / DSM 28221 / CCUG 30454 / Houston 1) (Rochalimaea henselae).